The chain runs to 518 residues: Metalloprotease TIKI2 (518 aa).

The N-terminal stretch at 1-22 (MNCQSGLRWLVTLCAFFQVGSA) is a signal peptide. Over 23–499 (RDTHESTRQC…SALDSAAPNP (477 aa)) the chain is Extracellular. N-linked (GlcNAc...) asparagine glycosylation is found at Asn224, Asn233, Asn282, Asn325, and Asn340. A helical transmembrane segment spans residues 500–517 (TYALTCFLACLISQLLFA). A topological domain (cytoplasmic) is located at residue Ser518.

It belongs to the TIKI family. Mn(2+) is required as a cofactor. The cofactor is Co(2+).

It localises to the cell membrane. Functionally, metalloprotease that acts as a negative regulator of the Wnt signaling pathway by mediating the cleavage of the N-terminal residues of a subset of Wnt proteins. Following cleavage, Wnt proteins become oxidized and form large disulfide-bond oligomers, leading to their inactivation. This chain is Metalloprotease TIKI2 (trabd2b), found in Danio rerio (Zebrafish).